Here is a 258-residue protein sequence, read N- to C-terminus: Imidazole glycerol phosphate synthase subunit HisF (258 aa).

Active-site residues include D11 and D130.

Belongs to the HisA/HisF family. Heterodimer of HisH and HisF.

The protein resides in the cytoplasm. The catalysed reaction is 5-[(5-phospho-1-deoxy-D-ribulos-1-ylimino)methylamino]-1-(5-phospho-beta-D-ribosyl)imidazole-4-carboxamide + L-glutamine = D-erythro-1-(imidazol-4-yl)glycerol 3-phosphate + 5-amino-1-(5-phospho-beta-D-ribosyl)imidazole-4-carboxamide + L-glutamate + H(+). It participates in amino-acid biosynthesis; L-histidine biosynthesis; L-histidine from 5-phospho-alpha-D-ribose 1-diphosphate: step 5/9. IGPS catalyzes the conversion of PRFAR and glutamine to IGP, AICAR and glutamate. The HisF subunit catalyzes the cyclization activity that produces IGP and AICAR from PRFAR using the ammonia provided by the HisH subunit. This Escherichia coli (strain ATCC 8739 / DSM 1576 / NBRC 3972 / NCIMB 8545 / WDCM 00012 / Crooks) protein is Imidazole glycerol phosphate synthase subunit HisF.